We begin with the raw amino-acid sequence, 793 residues long: Protein PAT1 homolog (793 aa).

Phosphoserine is present on residues Ser200 and Ser208. Disordered regions lie at residues 203-256 (PPGS…TGNR) and 292-312 (MLQQPPHQNGLMPPQMQGSQN). Polar residues predominate over residues 219 to 242 (PYQSGGPQMGSPNFSPFPNLQPQL). A phosphoserine mark is found at Ser342 and Ser343. Residues 476-501 (RPLLEVDPPNSAKFGNAEHKPTDKPL) are disordered. Basic and acidic residues predominate over residues 491-501 (NAEHKPTDKPL).

In terms of assembly, interacts with MPK4 and SUMM2. Phosphorylated at Ser-208 by MPK4 upon flg22 elicitation. Phosphorylated at Ser-200, Ser-342 and Ser-343 upon flg22 elicitation.

It is found in the cytoplasm. It localises to the P-body. Functionally, activator of mRNA decapping. Involved in mRNA decay via decapping. Involved in disease resistance in response to biotrophic and necrotrophic pathogens. Is part of a signaling pathway including MPK4 and the disease resistance protein SUMM2. In Arabidopsis thaliana (Mouse-ear cress), this protein is Protein PAT1 homolog.